Here is a 326-residue protein sequence, read N- to C-terminus: N-(2-amino-2-carboxyethyl)-L-glutamate synthase (326 aa).

Lys-47 bears the N6-(pyridoxal phosphate)lysine mark. Residues Asn-77, 185 to 189, and Ser-272 contribute to the pyridoxal 5'-phosphate site; that span reads STTGS.

The protein belongs to the cysteine synthase/cystathionine beta-synthase family. SbnA subfamily. In terms of assembly, homodimer. It depends on pyridoxal 5'-phosphate as a cofactor.

It carries out the reaction O-phospho-L-serine + L-glutamate = N-[(2S)-2-amino-2-carboxyethyl]-L-glutamate + phosphate + H(+). It functions in the pathway siderophore biosynthesis. Catalyzes the synthesis of N-((2S)-2-amino-2-carboxyethyl)-L-glutamate (ACEGA) from O-phospho-L-serine and L-glutamate. Involved in the biosynthesis of L-2,3-diaminopropionic acid (L-Dap), a precursor of staphyloferrin B and antibiotics. The polypeptide is N-(2-amino-2-carboxyethyl)-L-glutamate synthase (sbnA) (Staphylococcus aureus (strain COL)).